Reading from the N-terminus, the 282-residue chain is MFERNVPSVLLRNIGVSAADPQARFSVAARVRNASNDAHGFGEPISFLLDVAAGAQDASLRGVVDLRRAHPDLVDVSCTARGIPLAVPAPAEGFPELSGVLGLHTQVFVRKDHSVELKMGARISDSVLRAAPFEPRVLFDVYADVLRQIRQIAFEATVRVSAEGALSISVESDADGAFVRALSRAFAQQVDALRRAVIAEGERFLAQQRRVYAQEIAQVTQLVSRAEDAIAQLGVSSRVIQQKRAEAERLLEAAARKALGEVTKRAADELQNKARDAFRSFF.

Residues 205-277 are a coiled coil; it reads LAQQRRVYAQ…DELQNKARDA (73 aa).

This is an uncharacterized protein from Treponema pallidum (strain Nichols).